Reading from the N-terminus, the 586-residue chain is Clathrin heavy chain linker domain-containing protein 1 (586 aa).

Positions Met174–Gln232 form a coiled coil.

This is Clathrin heavy chain linker domain-containing protein 1 (CLHC1) from Macaca fascicularis (Crab-eating macaque).